A 506-amino-acid polypeptide reads, in one-letter code: Lysine--tRNA ligase (506 aa).

Mg(2+)-binding residues include Glu411 and Glu418.

This sequence belongs to the class-II aminoacyl-tRNA synthetase family. Homodimer. Mg(2+) is required as a cofactor.

The protein resides in the cytoplasm. It catalyses the reaction tRNA(Lys) + L-lysine + ATP = L-lysyl-tRNA(Lys) + AMP + diphosphate. In Thermosynechococcus vestitus (strain NIES-2133 / IAM M-273 / BP-1), this protein is Lysine--tRNA ligase.